Consider the following 745-residue polypeptide: Inhibitor of nuclear factor kappa-B kinase subunit alpha (745 aa).

The Protein kinase domain maps to 15–300 (WEMRERLGTG…IDLTLKQPRC (286 aa)). ATP is bound by residues 21–29 (LGTGGFGNV) and lysine 44. Threonine 23 is subject to Phosphothreonine; by PKB/AKT1 and SGK1. Catalysis depends on aspartate 144, which acts as the Proton acceptor. Serine 176 carries the phosphoserine; by MAP3K14 modification. Residue serine 180 is modified to Phosphoserine; by SGK1. The segment at 455–476 (LLRYNANLTKMKNTLISASQQL) is leucine-zipper. The tract at residues 738 to 743 (LDWSWL) is NEMO-binding.

Belongs to the protein kinase superfamily. Ser/Thr protein kinase family. I-kappa-B kinase subfamily. Component of the I-kappa-B-kinase (IKK) core complex consisting of CHUK, IKBKB and IKBKG; probably four alpha/CHUK-beta/IKBKB dimers are associated with four gamma/IKBKG subunits. The IKK core complex seems to associate with regulatory or adapter proteins to form a IKK-signalosome holo-complex. The IKK complex associates with TERF2IP/RAP1, leading to promote IKK-mediated phosphorylation of RELA/p65. Part of a complex composed of NCOA2, NCOA3, CHUK/IKKA, IKBKB, IKBKG and CREBBP. Part of a 70-90 kDa complex at least consisting of CHUK/IKKA, IKBKB, NFKBIA, RELA, ELP1 and MAP3K14. Directly interacts with TRPC4AP. May interact with TRAF2. Interacts with NALP2. May interact with MAVS/IPS1. Interacts with ARRB1 and ARRB2. Interacts with NLRC5; prevents CHUK phosphorylation and kinase activity. Interacts with PIAS1; this interaction induces PIAS1 phosphorylation. Interacts with ZNF268 isoform 2; the interaction is further increased in a TNF-alpha-dependent manner. Interacts with LRRC14. Interacts with SASH1. Directly interacts with DDX3X after the physiological activation of the TLR7 and TLR8 pathways; this interaction enhances CHUK autophosphorylation. Ubiquitinated by TRIM56 via 'Lys-63'-linked ubiquitination, promoting activation of CHUK/IKKA. In terms of processing, phosphorylated by MAP3K14/NIK, AKT and to a lesser extent by MEKK1, and dephosphorylated by PP2A. Autophosphorylated. Ubiquitous only for isoform 1, isoforms 2 and 3 are expressed predominantly in brain and T-lymphocytes.

It is found in the cytoplasm. The protein localises to the nucleus. The catalysed reaction is L-seryl-[I-kappa-B protein] + ATP = O-phospho-L-seryl-[I-kappa-B protein] + ADP + H(+). Its activity is regulated as follows. Activated when phosphorylated and inactivated when dephosphorylated. Its function is as follows. Serine kinase that plays an essential role in the NF-kappa-B signaling pathway which is activated by multiple stimuli such as inflammatory cytokines, bacterial or viral products, DNA damages or other cellular stresses. Acts as a part of the canonical IKK complex in the conventional pathway of NF-kappa-B activation and phosphorylates inhibitors of NF-kappa-B on serine residues. These modifications allow polyubiquitination of the inhibitors and subsequent degradation by the proteasome. In turn, free NF-kappa-B is translocated into the nucleus and activates the transcription of hundreds of genes involved in immune response, growth control, or protection against apoptosis. Negatively regulates the pathway by phosphorylating the scaffold protein TAXBP1 and thus promoting the assembly of the A20/TNFAIP3 ubiquitin-editing complex (composed of A20/TNFAIP3, TAX1BP1, and the E3 ligases ITCH and RNF11). Therefore, CHUK plays a key role in the negative feedback of NF-kappa-B canonical signaling to limit inflammatory gene activation. As part of the non-canonical pathway of NF-kappa-B activation, the MAP3K14-activated CHUK/IKKA homodimer phosphorylates NFKB2/p100 associated with RelB, inducing its proteolytic processing to NFKB2/p52 and the formation of NF-kappa-B RelB-p52 complexes. In turn, these complexes regulate genes encoding molecules involved in B-cell survival and lymphoid organogenesis. Also participates in the negative feedback of the non-canonical NF-kappa-B signaling pathway by phosphorylating and destabilizing MAP3K14/NIK. Within the nucleus, phosphorylates CREBBP and consequently increases both its transcriptional and histone acetyltransferase activities. Modulates chromatin accessibility at NF-kappa-B-responsive promoters by phosphorylating histones H3 at 'Ser-10' that are subsequently acetylated at 'Lys-14' by CREBBP. Additionally, phosphorylates the CREBBP-interacting protein NCOA3. Also phosphorylates FOXO3 and may regulate this pro-apoptotic transcription factor. Phosphorylates RIPK1 at 'Ser-25' which represses its kinase activity and consequently prevents TNF-mediated RIPK1-dependent cell death. Phosphorylates AMBRA1 following mitophagy induction, promoting AMBRA1 interaction with ATG8 family proteins and its mitophagic activity. The protein is Inhibitor of nuclear factor kappa-B kinase subunit alpha (Chuk) of Mus musculus (Mouse).